The sequence spans 1489 residues: Calmodulin-regulated spectrin-associated protein 2 (1489 aa).

The Calponin-homology (CH) domain occupies 222 to 335 (WKLVPARYRK…FMAELFWWFE (114 aa)). Residues 375 to 415 (SSDFPSSGEGATFTQSHHHLPSRYSRPQAHSSASGGIRRSS) are disordered. Low complexity predominate over residues 405-415 (SSASGGIRRSS). Ser416 and Ser418 each carry phosphoserine. Thr426 is subject to Phosphothreonine. 5 positions are modified to phosphoserine: Ser464, Ser598, Ser599, Ser611, and Ser673. 2 disordered regions span residues 611 to 639 (SPITDNTEVDTGIHVPSEDIPETMDEDSS) and 668 to 730 (TREA…GSEL). Residues 668 to 679 (TREALSPCPSTV) are compositionally biased toward polar residues. A Phosphothreonine modification is found at Thr678. Ser680 carries the phosphoserine modification. Low complexity predominate over residues 680–699 (STKSQPGSSASSSSGVKMTS). The span at 703–713 (QKFRKLNHTDG) shows a compositional bias: basic and acidic residues. Residues 756–793 (LLASEMVHLRMKLEEKRRAIEAQKKKMEAAFTKQRQKM) are a coiled coil. The tract at residues 812–844 (LREEAAGAEDEKVYTDRAKEKESQKTDGQRSKS) is disordered. Ser862 is subject to Phosphoserine. Residues 887 to 926 (EILEYTKSIEKLNSSLHFLQQEMQRLSLQQEMLMQMREQQ) are a coiled coil. An MBD region region spans residues 922–1034 (MREQQSWVIS…IQTRSFVCFG (113 aa)). The interval 925–1017 (QQSWVISPPQ…SVDSLPRLRR (93 aa)) is disordered. 2 positions are modified to phosphoserine: Ser931 and Ser936. Over residues 960–989 (SSDSPRPTHPSPQSSNRKSASFSVKSQRTP) the composition is skewed to polar residues. 3 positions are modified to phosphothreonine: Thr997, Thr1002, and Thr1004. Phosphoserine is present on residues Ser1008 and Ser1019. Disordered stretches follow at residues 1032-1078 (CFGD…PFES), 1096-1152 (PNED…DKEQ), and 1191-1349 (KETQ…EYTG). The span at 1039-1075 (PQLKESKPKEEVKKEELESKGTLEQRGHNPEEKEIKP) shows a compositional bias: basic and acidic residues. Residues 1105-1117 (TEPPPKPVFPPTA) show a composition bias toward pro residues. Composition is skewed to basic and acidic residues over residues 1132-1152 (KPPEKADVPVEKYDGESDKEQ) and 1191-1252 (KETQ…DTVI). A Phosphoserine modification is found at Ser1148. The stretch at 1166–1238 (KDDQKAENDM…REFIRQEYMR (73 aa)) forms a coiled coil. The segment covering 1287 to 1299 (SSLSLASLNTGDN) has biased composition (polar residues). Ser1313, Ser1319, and Ser1321 each carry phosphoserine. The span at 1334–1346 (NASTTSSVASGTE) shows a compositional bias: polar residues. The region spanning 1349-1483 (GPKLYKEPSA…QTKRPVTPKK (135 aa)) is the CKK domain.

This sequence belongs to the CAMSAP1 family. As to quaternary structure, interacts with CAMSAP3. Interacts with KATNA1 and KATNB1; leading to regulate the length of CAMSAP2-decorated microtubule stretches. Interacts with a complex formed by AKAP9 and PDE4DIP isoform 13/MMG8/SMYLE, which recruits CAMSAP2 to the Golgi. Interacts with MAPRE1/EB1.

It is found in the cytoplasm. The protein localises to the cytoskeleton. Its subcellular location is the golgi apparatus. The protein resides in the cilium basal body. In terms of biological role, key microtubule-organizing protein that specifically binds the minus-end of non-centrosomal microtubules and regulates their dynamics and organization. Specifically recognizes growing microtubule minus-ends and autonomously decorates and stabilizes microtubule lattice formed by microtubule minus-end polymerization. Acts on free microtubule minus-ends that are not capped by microtubule-nucleating proteins or other factors and protects microtubule minus-ends from depolymerization. In addition, it also reduces the velocity of microtubule polymerization. Through the microtubule cytoskeleton, also regulates the organization of cellular organelles including the Golgi and the early endosomes. Essential for the tethering, but not for nucleation of non-centrosomal microtubules at the Golgi: together with Golgi-associated proteins AKAP9 and PDE4DIP, required to tether non-centrosomal minus-end microtubules to the Golgi, an important step for polarized cell movement. Also acts as a regulator of neuronal polarity and development: localizes to non-centrosomal microtubule minus-ends in neurons and stabilizes non-centrosomal microtubules, which is required for neuronal polarity, axon specification and dendritic branch formation. Through the microtubule cytoskeleton, regulates the autophagosome transport. The sequence is that of Calmodulin-regulated spectrin-associated protein 2 from Homo sapiens (Human).